A 315-amino-acid polypeptide reads, in one-letter code: Trimethylguanosine synthase (315 aa).

Residues 1–58 form a required for correct nucleolar localization region; the sequence is MGRTFIHASKIKHAARKRKHHSNFRTLIKLLNNDAYKIESSKPLKNGKLFKYWKNRRR. Residue Asp-126 participates in S-adenosyl-L-methionine binding. Residues 271–315 are disordered; sequence TENSRRESSEKEELSSENEELSKRKKHESTTTTKDNTVDIYDVNG. Positions 273-284 are enriched in basic and acidic residues; sequence NSRRESSEKEEL.

This sequence belongs to the methyltransferase superfamily. Trimethylguanosine synthase family. As to quaternary structure, monomer. Interacts with the spliceosomal snRNP core component SMB1 and the snoRNP components CBF5 and NOP58.

The protein resides in the nucleus. The protein localises to the nucleolus. It catalyses the reaction a 5'-end (N(7)-methyl 5'-triphosphoguanosine)-ribonucleoside in snRNA + S-adenosyl-L-methionine = a 5'-end (N(2),N(7)-dimethyl 5'-triphosphoguanosine)-ribonucleoside in snRNA + S-adenosyl-L-homocysteine + H(+). The enzyme catalyses a 5'-end (N(7)-methyl 5'-triphosphoguanosine)-ribonucleoside in snoRNA + S-adenosyl-L-methionine = a 5'-end (N(2),N(7)-dimethyl 5'-triphosphoguanosine)-ribonucleoside in snoRNA + S-adenosyl-L-homocysteine + H(+). The catalysed reaction is a 5'-end (N(2),N(7)-dimethyl 5'-triphosphoguanosine)-ribonucleoside in snRNA + S-adenosyl-L-methionine = a 5'-end (N(2),N(2),N(7)-trimethyl 5'-triphosphoguanosine)-ribonucleoside in snRNA + S-adenosyl-L-homocysteine + H(+). It carries out the reaction a 5'-end (N(2),N(7)-dimethyl 5'-triphosphoguanosine)-ribonucleoside in snoRNA + S-adenosyl-L-methionine = a 5'-end (N(2),N(2),N(7)-trimethyl 5'-triphosphoguanosine)-ribonucleoside in snoRNA + S-adenosyl-L-homocysteine + H(+). With respect to regulation, substrate inhibited by S-adenosyl-L-homocysteine. Functionally, catalyzes the two serial methylation steps for the conversion of the 7-monomethylguanosine (m(7)G) caps of snRNAs and snoRNAs to a 2,2,7-trimethylguanosine (m(2,2,7)G) cap structure. The enzyme is specific for guanine, and N7 methylation must precede N2 methylation. Hypermethylates the m3G cap on TLC1 telomerase which affects telomere silencing and telomere length regulation. Required for pre-mRNA splicing, pre-rRNA processing and small ribosomal subunit synthesis. Involved in nucleolar structural organization. The polypeptide is Trimethylguanosine synthase (TGS1) (Saccharomyces cerevisiae (strain ATCC 204508 / S288c) (Baker's yeast)).